Consider the following 525-residue polypeptide: GMP synthase [glutamine-hydrolyzing] (525 aa).

The Glutamine amidotransferase type-1 domain occupies 9-207 (RILILDFGSQ…VRDICQCEAL (199 aa)). Cys-86 acts as the Nucleophile in catalysis. Catalysis depends on residues His-181 and Glu-183. One can recognise a GMPS ATP-PPase domain in the interval 208–400 (WTPAKIIDDA…LGLPYDMLYR (193 aa)). An ATP-binding site is contributed by 235 to 241 (SGGVDSS).

In terms of assembly, homodimer.

The enzyme catalyses XMP + L-glutamine + ATP + H2O = GMP + L-glutamate + AMP + diphosphate + 2 H(+). Its pathway is purine metabolism; GMP biosynthesis; GMP from XMP (L-Gln route): step 1/1. Catalyzes the synthesis of GMP from XMP. The chain is GMP synthase [glutamine-hydrolyzing] from Shigella boydii serotype 4 (strain Sb227).